The sequence spans 256 residues: Thiazole synthase (256 aa).

Lys-98 acts as the Schiff-base intermediate with DXP in catalysis. 1-deoxy-D-xylulose 5-phosphate contacts are provided by residues Gly-159, 185 to 186, and 207 to 208; these read AG and NT.

It belongs to the ThiG family. Homotetramer. Forms heterodimers with either ThiH or ThiS.

Its subcellular location is the cytoplasm. It carries out the reaction [ThiS sulfur-carrier protein]-C-terminal-Gly-aminoethanethioate + 2-iminoacetate + 1-deoxy-D-xylulose 5-phosphate = [ThiS sulfur-carrier protein]-C-terminal Gly-Gly + 2-[(2R,5Z)-2-carboxy-4-methylthiazol-5(2H)-ylidene]ethyl phosphate + 2 H2O + H(+). It participates in cofactor biosynthesis; thiamine diphosphate biosynthesis. Its function is as follows. Catalyzes the rearrangement of 1-deoxy-D-xylulose 5-phosphate (DXP) to produce the thiazole phosphate moiety of thiamine. Sulfur is provided by the thiocarboxylate moiety of the carrier protein ThiS. In vitro, sulfur can be provided by H(2)S. In Aliivibrio fischeri (strain ATCC 700601 / ES114) (Vibrio fischeri), this protein is Thiazole synthase.